Consider the following 450-residue polypeptide: UDP-N-acetylmuramoylalanine--D-glutamate ligase (450 aa).

Residue 112–118 (GSNGKTT) participates in ATP binding.

It belongs to the MurCDEF family.

It is found in the cytoplasm. It catalyses the reaction UDP-N-acetyl-alpha-D-muramoyl-L-alanine + D-glutamate + ATP = UDP-N-acetyl-alpha-D-muramoyl-L-alanyl-D-glutamate + ADP + phosphate + H(+). It functions in the pathway cell wall biogenesis; peptidoglycan biosynthesis. Its function is as follows. Cell wall formation. Catalyzes the addition of glutamate to the nucleotide precursor UDP-N-acetylmuramoyl-L-alanine (UMA). The chain is UDP-N-acetylmuramoylalanine--D-glutamate ligase from Cytophaga hutchinsonii (strain ATCC 33406 / DSM 1761 / CIP 103989 / NBRC 15051 / NCIMB 9469 / D465).